A 642-amino-acid polypeptide reads, in one-letter code: Protein BZZ1 (642 aa).

Residues 6 to 272 form the F-BAR domain; it reads YKFSDELHDD…EIAKNEPVLD (267 aa). The stretch at 113–190 forms a coiled coil; the sequence is LDIAEKLKKL…QRNLKLSESD (78 aa). The Phorbol-ester/DAG-type zinc finger occupies 397–447; the sequence is FHDFKHVSFKLPTSCSYCREIIWGLSKRGCVCKNCGFKCHARCELLVPANC. 2 consecutive SH3 domains span residues 515-575 and 584-642; these read ASKV…LNDE and GDSS…VTDV.

Belongs to the BZZ1 family.

Its subcellular location is the cell tip. The protein localises to the cytoplasm. It is found in the cytoskeleton. It localises to the actin patch. Functionally, plays a role in endocytosis and trafficking to the vacuole. Functions with type I myosins to restore polarity of the actin cytoskeleton after NaCl stress. The protein is Protein BZZ1 (bzz1) of Schizosaccharomyces pombe (strain 972 / ATCC 24843) (Fission yeast).